A 66-amino-acid polypeptide reads, in one-letter code: Metallothionein (66 aa).

An N-acetylserine modification is found at Ser1. Cd(2+) contacts are provided by Cys9, Cys13, Cys18, Cys20, Cys24, Cys26, Cys30, Cys32, Cys35, Cys38, Cys40, Cys45, Cys47, Cys51, Cys57, Cys59, Cys63, and Cys65.

It belongs to the metallothionein superfamily. Type 2 family.

In terms of biological role, the metallothioneins are involved in the cellular sequestration of toxic metal ions and regulation of essential trace elements. This Arianta arbustorum (Land snail) protein is Metallothionein.